Reading from the N-terminus, the 99-residue chain is Orphan antixoxin protein TacA (99 aa).

Belongs to the TacA antitoxin family.

In terms of biological role, putative antitoxin component of a toxin-antitoxin (TA) system; its cognate toxin (usually a tRNA acetylase) is unknown. The sequence is that of Orphan antixoxin protein TacA from Haemophilus influenzae (strain ATCC 51907 / DSM 11121 / KW20 / Rd).